We begin with the raw amino-acid sequence, 374 residues long: MEMO1 family protein aq_1336 (374 aa).

It belongs to the MEMO1 family.

In Aquifex aeolicus (strain VF5), this protein is MEMO1 family protein aq_1336.